The following is a 431-amino-acid chain: Enolase (431 aa).

Residue Gln-166 participates in (2R)-2-phosphoglycerate binding. Catalysis depends on Glu-208, which acts as the Proton donor. The Mg(2+) site is built by Asp-245, Glu-288, and Asp-315. 4 residues coordinate (2R)-2-phosphoglycerate: Lys-340, Arg-369, Ser-370, and Lys-391. Lys-340 serves as the catalytic Proton acceptor.

This sequence belongs to the enolase family. The cofactor is Mg(2+).

It is found in the cytoplasm. The protein resides in the secreted. It localises to the cell surface. The enzyme catalyses (2R)-2-phosphoglycerate = phosphoenolpyruvate + H2O. Its pathway is carbohydrate degradation; glycolysis; pyruvate from D-glyceraldehyde 3-phosphate: step 4/5. Functionally, catalyzes the reversible conversion of 2-phosphoglycerate (2-PG) into phosphoenolpyruvate (PEP). It is essential for the degradation of carbohydrates via glycolysis. The protein is Enolase of Clostridium botulinum (strain 657 / Type Ba4).